The sequence spans 408 residues: Imidazolonepropionase (408 aa).

Fe(3+) contacts are provided by H73 and H75. The Zn(2+) site is built by H73 and H75. Positions 82, 145, and 178 each coordinate 4-imidazolone-5-propanoate. N-formimidoyl-L-glutamate is bound at residue Y145. Residue H243 participates in Fe(3+) binding. H243 provides a ligand contact to Zn(2+). A 4-imidazolone-5-propanoate-binding site is contributed by Q246. D318 is a binding site for Fe(3+). Residue D318 coordinates Zn(2+). Residues N320 and G322 each coordinate N-formimidoyl-L-glutamate. Residue S323 coordinates 4-imidazolone-5-propanoate.

The protein belongs to the metallo-dependent hydrolases superfamily. HutI family. The cofactor is Zn(2+). It depends on Fe(3+) as a cofactor.

It localises to the cytoplasm. The enzyme catalyses 4-imidazolone-5-propanoate + H2O = N-formimidoyl-L-glutamate. It functions in the pathway amino-acid degradation; L-histidine degradation into L-glutamate; N-formimidoyl-L-glutamate from L-histidine: step 3/3. Catalyzes the hydrolytic cleavage of the carbon-nitrogen bond in imidazolone-5-propanoate to yield N-formimidoyl-L-glutamate. It is the third step in the universal histidine degradation pathway. This Shewanella loihica (strain ATCC BAA-1088 / PV-4) protein is Imidazolonepropionase.